Reading from the N-terminus, the 297-residue chain is Acetylglutamate kinase (297 aa).

Substrate is bound by residues 73 to 74 (GG), R95, and N188.

It belongs to the acetylglutamate kinase family. ArgB subfamily.

The protein resides in the cytoplasm. It catalyses the reaction N-acetyl-L-glutamate + ATP = N-acetyl-L-glutamyl 5-phosphate + ADP. It functions in the pathway amino-acid biosynthesis; L-arginine biosynthesis; N(2)-acetyl-L-ornithine from L-glutamate: step 2/4. Catalyzes the ATP-dependent phosphorylation of N-acetyl-L-glutamate. The sequence is that of Acetylglutamate kinase from Trichormus variabilis (strain ATCC 29413 / PCC 7937) (Anabaena variabilis).